We begin with the raw amino-acid sequence, 257 residues long: MLITISPAKTLDYTSPLATTRYTQPELLDYSSQLIDVCKKLTPAQIASLMSISDKLADLNAGRFSEWHPDFTPENARQALLAFKGDVYTGLAAEDFSEDDFDFAQQHLRMLSGLYGVLRPLDLMRPYRLEMGTKLENKAGKDLYSFWGDTITEKLNQALREQGDDVLVNLASDEYFKAVKPKKLNARLIKPVFLDEKNGKFKVISFYAKKARGLMSRFIIQNRLTQPEQLKAFNLDGYFFEAADSSADELVFKRHEQ.

This sequence belongs to the UPF0246 family.

This Pectobacterium carotovorum subsp. carotovorum (strain PC1) protein is UPF0246 protein PC1_3665.